A 670-amino-acid chain; its full sequence is Acetyl-coenzyme A synthetase (670 aa).

CoA-binding positions include 205 to 208 and threonine 326; that span reads RRGR. ATP-binding positions include 402–404, 426–431, aspartate 517, arginine 532, and arginine 543; these read GEP and STWWMT. Positions 556 and 559 each coordinate Mg(2+). A CoA-binding site is contributed by arginine 601. Residue lysine 626 is modified to N6-acetyllysine.

This sequence belongs to the ATP-dependent AMP-binding enzyme family. Requires Mg(2+) as cofactor. Post-translationally, acetylated. Deacetylation by the SIR2-homolog deacetylase activates the enzyme.

The catalysed reaction is acetate + ATP + CoA = acetyl-CoA + AMP + diphosphate. Its function is as follows. Catalyzes the conversion of acetate into acetyl-CoA (AcCoA), an essential intermediate at the junction of anabolic and catabolic pathways. AcsA undergoes a two-step reaction. In the first half reaction, AcsA combines acetate with ATP to form acetyl-adenylate (AcAMP) intermediate. In the second half reaction, it can then transfer the acetyl group from AcAMP to the sulfhydryl group of CoA, forming the product AcCoA. The polypeptide is Acetyl-coenzyme A synthetase (Pyrobaculum aerophilum (strain ATCC 51768 / DSM 7523 / JCM 9630 / CIP 104966 / NBRC 100827 / IM2)).